Reading from the N-terminus, the 568-residue chain is Dihydroxy-acid dehydratase 1 (568 aa).

A disordered region spans residues 1–22 (MAEQTNTPDLKPRSRDVTDGLE). The span at 10–22 (LKPRSRDVTDGLE) shows a compositional bias: basic and acidic residues. C57 is a binding site for [2Fe-2S] cluster. Residue D89 participates in Mg(2+) binding. C130 provides a ligand contact to [2Fe-2S] cluster. Residues D131 and K132 each contribute to the Mg(2+) site. K132 is subject to N6-carboxylysine. A [2Fe-2S] cluster-binding site is contributed by C207. E458 is a binding site for Mg(2+). The active-site Proton acceptor is the S484.

Belongs to the IlvD/Edd family. As to quaternary structure, homodimer. [2Fe-2S] cluster is required as a cofactor. The cofactor is Mg(2+).

The enzyme catalyses (2R)-2,3-dihydroxy-3-methylbutanoate = 3-methyl-2-oxobutanoate + H2O. The catalysed reaction is (2R,3R)-2,3-dihydroxy-3-methylpentanoate = (S)-3-methyl-2-oxopentanoate + H2O. Its pathway is amino-acid biosynthesis; L-isoleucine biosynthesis; L-isoleucine from 2-oxobutanoate: step 3/4. It functions in the pathway amino-acid biosynthesis; L-valine biosynthesis; L-valine from pyruvate: step 3/4. Functionally, functions in the biosynthesis of branched-chain amino acids. Catalyzes the dehydration of (2R,3R)-2,3-dihydroxy-3-methylpentanoate (2,3-dihydroxy-3-methylvalerate) into 2-oxo-3-methylpentanoate (2-oxo-3-methylvalerate) and of (2R)-2,3-dihydroxy-3-methylbutanoate (2,3-dihydroxyisovalerate) into 2-oxo-3-methylbutanoate (2-oxoisovalerate), the penultimate precursor to L-isoleucine and L-valine, respectively. The sequence is that of Dihydroxy-acid dehydratase 1 from Nocardia farcinica (strain IFM 10152).